A 500-amino-acid polypeptide reads, in one-letter code: 7-alpha-hydroxycholest-4-en-3-one 12-alpha-hydroxylase (500 aa).

Residues 2-21 (VLWGLLGALLMVMVGWLCLP) form a helical membrane-spanning segment. Residue S325 is modified to Phosphoserine. C439 is a heme binding site.

This sequence belongs to the cytochrome P450 family. The cofactor is heme. In terms of tissue distribution, liver (at protein level).

It localises to the endoplasmic reticulum membrane. The protein resides in the microsome membrane. The catalysed reaction is 7alpha-hydroxycholest-4-en-3-one + reduced [NADPH--hemoprotein reductase] + O2 = 7alpha,12alpha-dihydroxycholest-4-en-3-one + oxidized [NADPH--hemoprotein reductase] + H2O + H(+). It catalyses the reaction 5beta-cholestane-3alpha,7alpha-diol + reduced [NADPH--hemoprotein reductase] + O2 = 5beta-cholestane-3alpha,7alpha,12alpha-triol + oxidized [NADPH--hemoprotein reductase] + H2O + H(+). It carries out the reaction chenodeoxycholate + reduced [NADPH--hemoprotein reductase] + O2 = cholate + oxidized [NADPH--hemoprotein reductase] + H2O + H(+). Its pathway is lipid metabolism; bile acid biosynthesis. Its activity is regulated as follows. Up-regulated upon treatment with streptozotocin. Functionally, a cytochrome P450 monooxygenase involved in primary bile acid biosynthesis. Catalyzes the 12alpha-hydroxylation of 7alpha-hydroxy-4-cholesten-3-one, an intermediate metabolite in cholic acid biosynthesis. Controls biliary balance of cholic acid and chenodeoxycholic acid, ultimately regulating the intestinal absorption of dietary lipids. Mechanistically, uses molecular oxygen inserting one oxygen atom into a substrate, and reducing the second into a water molecule, with two electrons provided by NADPH via cytochrome P450 reductase (CPR; NADPH--hemoprotein reductase). The protein is 7-alpha-hydroxycholest-4-en-3-one 12-alpha-hydroxylase (CYP8B1) of Oryctolagus cuniculus (Rabbit).